A 175-amino-acid chain; its full sequence is Nucleoside triphosphate/diphosphate phosphatase (175 aa).

The Proton donor role is filled by Arg-23. The Mg(2+) site is built by Asn-87, Asp-103, Asp-105, Asp-107, Asp-120, and Glu-123.

This sequence belongs to the Ntdp family. Mg(2+) is required as a cofactor.

It carries out the reaction a ribonucleoside 5'-triphosphate + H2O = a ribonucleoside 5'-diphosphate + phosphate + H(+). The enzyme catalyses a ribonucleoside 5'-diphosphate + H2O = a ribonucleoside 5'-phosphate + phosphate + H(+). Its function is as follows. Has nucleoside phosphatase activity towards nucleoside triphosphates and nucleoside diphosphates. The chain is Nucleoside triphosphate/diphosphate phosphatase from Listeria monocytogenes serotype 4b (strain CLIP80459).